The primary structure comprises 124 residues: Small ribosomal subunit protein bS6 (124 aa).

The protein belongs to the bacterial ribosomal protein bS6 family.

Binds together with bS18 to 16S ribosomal RNA. The polypeptide is Small ribosomal subunit protein bS6 (Campylobacter lari (strain RM2100 / D67 / ATCC BAA-1060)).